A 66-amino-acid chain; its full sequence is MGMRMMFTVFLLVVLATTVVSFTSGRRTFHGRNAAAKASGLVSLTDRRPECCSHPACNVDHPEICR.

The N-terminal stretch at 1 to 21 (MGMRMMFTVFLLVVLATTVVS) is a signal peptide. Positions 22-49 (FTSGRRTFHGRNAAAKASGLVSLTDRRP) are excised as a propeptide. 2 disulfides stabilise this stretch: Cys-51–Cys-57 and Cys-52–Cys-65. The interval 53-55 (SHP) is ser-Xaa-Pro motif, crucial for potent interaction with nAChR.

Belongs to the conotoxin A superfamily. Expressed by the venom duct.

It is found in the secreted. Alpha-conotoxins act on postsynaptic membranes, they bind to the nicotinic acetylcholine receptors (nAChR) and thus inhibit them. The protein is Alpha-conotoxin-like Tx2 of Conus textile (Cloth-of-gold cone).